A 375-amino-acid chain; its full sequence is Succinyl-diaminopimelate desuccinylase (375 aa).

Residue H66 coordinates Zn(2+). The active site involves D68. D99 serves as a coordination point for Zn(2+). The active-site Proton acceptor is E133. The Zn(2+) site is built by E134, E162, and H348.

The protein belongs to the peptidase M20A family. DapE subfamily. Homodimer. It depends on Zn(2+) as a cofactor. The cofactor is Co(2+).

The enzyme catalyses N-succinyl-(2S,6S)-2,6-diaminopimelate + H2O = (2S,6S)-2,6-diaminopimelate + succinate. Its pathway is amino-acid biosynthesis; L-lysine biosynthesis via DAP pathway; LL-2,6-diaminopimelate from (S)-tetrahydrodipicolinate (succinylase route): step 3/3. Catalyzes the hydrolysis of N-succinyl-L,L-diaminopimelic acid (SDAP), forming succinate and LL-2,6-diaminopimelate (DAP), an intermediate involved in the bacterial biosynthesis of lysine and meso-diaminopimelic acid, an essential component of bacterial cell walls. This is Succinyl-diaminopimelate desuccinylase from Serratia proteamaculans (strain 568).